Consider the following 97-residue polypeptide: Co-chaperonin GroES (97 aa).

It belongs to the GroES chaperonin family. Heptamer of 7 subunits arranged in a ring. Interacts with the chaperonin GroEL.

It is found in the cytoplasm. Its function is as follows. Together with the chaperonin GroEL, plays an essential role in assisting protein folding. The GroEL-GroES system forms a nano-cage that allows encapsulation of the non-native substrate proteins and provides a physical environment optimized to promote and accelerate protein folding. GroES binds to the apical surface of the GroEL ring, thereby capping the opening of the GroEL channel. The sequence is that of Co-chaperonin GroES from Pectobacterium atrosepticum (strain SCRI 1043 / ATCC BAA-672) (Erwinia carotovora subsp. atroseptica).